A 544-amino-acid chain; its full sequence is MCVKGDAQLAAAAEISTLQPDAAKELDSFPWLTTAILLPIAASLAIPLVPDPGNGKGVRWYALGVSLTTFLITVGAYLNGYDPDIAGLQLRQVIPWVPDLGLGWSVGADGLSMPLILLTSFITTLACLAAWPVTFKPRLFFFLLLAMDGGQIAVFAVQDMLLFFLAWELELIPVYLLLAIWGGKKRQYAATKFILYTAVSSLFILLVALAMAFSGGGPVSFEYSDLAAKHLGAGFQALCYAGLLIAFGVKLPIVPLHTWLPDAHGEATAPVHMLLAGILLKMGGYALFRFNASMFPDAHVQFAPLLVVLGVVNIIYAALTSFAQRNLKRKIAYSSISHMGFVLIGIGSFSPLAASGAMLQMISHGLIGASLFFLVGATYDRTHTLQLDEMGGVGQRMRKMFAMWTACSLASLALPGMSGFVSELMVFVGFATDDAYTLPFRIVIDGAAAIGVILTPIYLLSMLREIFFGQEKPELSDANLVDAEPREIYIISCLLVPIIGIGLYPKLVTDSYRATIEQVVARDESSMKALTAPYLPLRSAPKLS.

The next 14 helical transmembrane spans lie at 29–49 (FPWLTTAILLPIAASLAIPLV), 60–80 (WYALGVSLTTFLITVGAYLNG), 115–135 (LILLTSFITTLACLAAWPVTF), 139–159 (LFFFLLLAMDGGQIAVFAVQD), 161–181 (LLFFLAWELELIPVYLLLAIW), 193–213 (FILYTAVSSLFILLVALAMAF), 234–254 (GFQALCYAGLLIAFGVKLPIV), 268–288 (TAPVHMLLAGILLKMGGYALF), 302–322 (FAPLLVVLGVVNIIYAALTSF), 339–359 (MGFVLIGIGSFSPLAASGAML), 360–380 (QMISHGLIGASLFFLVGATYD), 400–422 (MFAMWTACSLASLALPGMSGFVS), 442–462 (IVIDGAAAIGVILTPIYLLSM), and 488–508 (IYIISCLLVPIIGIGLYPKLV).

Belongs to the complex I subunit 4 family.

It localises to the cellular thylakoid membrane. The enzyme catalyses a plastoquinone + NADH + (n+1) H(+)(in) = a plastoquinol + NAD(+) + n H(+)(out). The catalysed reaction is a plastoquinone + NADPH + (n+1) H(+)(in) = a plastoquinol + NADP(+) + n H(+)(out). Its function is as follows. NDH-1 shuttles electrons from NAD(P)H, via FMN and iron-sulfur (Fe-S) centers, to quinones in the respiratory chain. The immediate electron acceptor for the enzyme in this species is believed to be plastoquinone. Couples the redox reaction to proton translocation (for every two electrons transferred, four hydrogen ions are translocated across the cytoplasmic membrane), and thus conserves the redox energy in a proton gradient. This is NAD(P)H-quinone oxidoreductase chain 4 from Synechococcus sp. (strain RCC307).